Consider the following 284-residue polypeptide: MEMO1 family protein Saci_0089 (284 aa).

The protein belongs to the MEMO1 family.

This chain is MEMO1 family protein Saci_0089, found in Sulfolobus acidocaldarius (strain ATCC 33909 / DSM 639 / JCM 8929 / NBRC 15157 / NCIMB 11770).